Reading from the N-terminus, the 1988-residue chain is Sodium channel protein type 9 subunit alpha (1988 aa).

The Cytoplasmic portion of the chain corresponds to 1-125 (MAMLPPPGPQ…RRISIKILVH (125 aa)). Residues 26 to 39 (RIAERKSKEPKEEK) show a composition bias toward basic and acidic residues. A disordered region spans residues 26 to 55 (RIAERKSKEPKEEKKDDDEEAPKPSSDLEA). The I repeat unit spans residues 112–410 (FSPLRRISIK…VAMAYEEQNQ (299 aa)). A helical transmembrane segment spans residues 126 to 145 (SLFSMLIMCTILTNCIFMTM). At 146–150 (NNPPD) the chain is on the extracellular side. The chain crosses the membrane as a helical span at residues 151-172 (WTKNVEYTFTGIYTFESLVKIL). Topologically, residues 173–185 (ARGFCVGEFTFLR) are cytoplasmic. Residues 186 to 204 (DPWNWLDFVVIVFAYLTEF) form a helical membrane-spanning segment. Residues 205 to 210 (VNLGNV) lie on the Extracellular side of the membrane. An N-linked (GlcNAc...) asparagine glycan is attached at N209. The chain crosses the membrane as a helical span at residues 211 to 227 (SALRTFRVLRALKTISV). At 228–241 (IPGLKTIVGALIQS) the chain is on the cytoplasmic side. Residues 242-267 (VKKLSDVMILTVFCLSVFALIGLQLF) form a helical membrane-spanning segment. At 268–346 (MGNLKHKCFR…PDYGYTSFDT (79 aa)) the chain is on the extracellular side. A disulfide bridge links C275 with C324. N283 carries N-linked (GlcNAc...) asparagine glycosylation. An intramembrane region (pore-forming) is located at residues 347–363 (FSWAFLALFRLMTQDYW). Residues 364 to 376 (ENLYQQTLRAAGK) lie on the Extracellular side of the membrane. Residues 377–402 (TYMIFFVVVIFLGSFYLINLILAVVA) traverse the membrane as a helical segment. Residues 403 to 745 (MAYEEQNQAN…CIYFIVMDPF (343 aa)) lie on the Cytoplasmic side of the membrane. A compositionally biased stretch (low complexity) spans 461–471 (SSSETSKLSSK). Disordered stretches follow at residues 461 to 543 (SSSE…RGSL) and 565 to 611 (GSET…SPPM). The span at 474–486 (KERRNRRKKKNQK) shows a compositional bias: basic residues. 2 stretches are compositionally biased toward basic and acidic residues: residues 489–510 (SSGEEKGDAEKLSKSESEDSIR) and 573–585 (DEHSIFGDNESRR). The II repeat unit spans residues 726 to 989 (CSPYWIKFKK…EEDPDANNLQ (264 aa)). A helical transmembrane segment spans residues 746–762 (VDLAITICIVLNTLFMA). At 763–771 (MEHHPMTEE) the chain is on the extracellular side. The helical transmembrane segment at 772-796 (FKNVLAIGNLVFTGIFAAEMVLKLI) threads the bilayer. The Cytoplasmic segment spans residues 797 to 805 (AMDPYEYFQ). A helical membrane pass occupies residues 806–822 (VGWNIFDSLIVTLSLVE). Residues 823-831 (LFLADVEGL) lie on the Extracellular side of the membrane. The chain crosses the membrane as a helical span at residues 832–848 (SVLRSFRLLRVFKLAKS). At 849-865 (WPTLNMLIKIIGNSVGA) the chain is on the cytoplasmic side. The helical transmembrane segment at 866–888 (LGNLTLVLAIIVFIFAVVGMQLF) threads the bilayer. Residues 889 to 915 (GKSYKECVCKINDDCTLPRWHMNDFFH) lie on the Extracellular side of the membrane. C897 and C903 are oxidised to a cystine. An intramembrane region (pore-forming) is located at residues 916-928 (SFLIVFRVLCGEW). At 929–940 (IETMWDCMEVAG) the chain is on the extracellular side. An intrachain disulfide couples C935 to C944. The chain crosses the membrane as a helical span at residues 941-967 (QAMCLIVYMMVMVIGNLVVLNLFLALL). Topologically, residues 968–1187 (LSSFSSDNLT…WWNIRKTCYK (220 aa)) are cytoplasmic. Positions 1102–1148 (NAEELSSDSDSEYSKVRLNRSSSSECSTVDNPLPGEGEEAEAEPMNS) are disordered. The span at 1120 to 1131 (NRSSSSECSTVD) shows a compositional bias: polar residues. The span at 1137–1148 (EGEEAEAEPMNS) shows a compositional bias: acidic residues. The III repeat unit spans residues 1180–1488 (NIRKTCYKIV…KKYYNAMKKL (309 aa)). Residues 1188 to 1212 (IVEHSWFESFIVLMILLSSGALAFE) form a helical membrane-spanning segment. Residues 1213-1224 (DIYIERKKTIKI) lie on the Extracellular side of the membrane. Residues 1225–1250 (ILEYADKIFTYIFILEMLLKWIAYGY) traverse the membrane as a helical segment. The Cytoplasmic portion of the chain corresponds to 1251 to 1252 (KT). The chain crosses the membrane as a helical span at residues 1253-1278 (YFTNAWCWLDFLIVDVSLVTLVANTL). Residues 1279 to 1287 (GYSDLGPIK) are Extracellular-facing. Residues 1288–1304 (SLRTLRALRPLRALSRF) form a helical membrane-spanning segment. Residues 1305–1317 (EGMRVVVNALIGA) are Cytoplasmic-facing. Residues 1318 to 1342 (IPSIMNVLLVCLIFWLIFSIMGVNL) form a helical membrane-spanning segment. The Extracellular portion of the chain corresponds to 1343-1394 (FAGKFYECINTTDGSRFPASQVPNRSECFALMNVSQNVRWKNLKVNFDNVGL). The cysteines at positions 1350 and 1370 are disulfide-linked. N1352, N1366, and N1375 each carry an N-linked (GlcNAc...) asparagine glycan. Residues 1395 to 1405 (GYLSLLQVATF) constitute an intramembrane region (pore-forming). Over 1406-1431 (KGWTIIMYAAVDSVNVDKQPKYEYSL) the chain is Extracellular. Residues 1432 to 1457 (YMYIYFVVFIIFGSFFTLNLFIGVII) form a helical membrane-spanning segment. At 1458–1514 (DNFNQQKKKLGGQDIFMTEEQKKYYNAMKKLGSKKPQKPIPRPGNKIQGCIFDLVTN) the chain is on the cytoplasmic side. Position 1490 is a phosphoserine; by PKC (S1490). Residues 1497-1795 (IPRPGNKIQG…WEKFDPDATQ (299 aa)) form an IV repeat. Residues 1515 to 1534 (QAFDISIMVLICLNMVTMMV) traverse the membrane as a helical segment. Over 1535–1545 (EKEGQSQHMTE) the chain is Extracellular. The helical transmembrane segment at 1546–1567 (VLYWINVVFIILFTGECVLKLI) threads the bilayer. Residues 1568–1576 (SLRHYYFTV) lie on the Cytoplasmic side of the membrane. A helical transmembrane segment spans residues 1577 to 1598 (GWNIFDFVVVIISIVGMFLADL). Topologically, residues 1599–1607 (IETYFVSPT) are extracellular. A helical transmembrane segment spans residues 1608–1627 (LFRVIRLARIGRILRLVKGA). Over 1628–1640 (KGIRTLLFALMMS) the chain is Cytoplasmic. The chain crosses the membrane as a helical span at residues 1641–1663 (LPALFNIGLLLFLVMFIYAIFGM). At 1664 to 1686 (SNFAYVKKEDGINDMFNFETFGN) the chain is on the extracellular side. An intramembrane region (pore-forming) is located at residues 1687 to 1699 (SMICLFQITTSAG). Topologically, residues 1700 to 1733 (WDGLLAPILNSKPPDCDPKKVHPGSSVEGDCGNP) are extracellular. Residues C1715 and C1730 are joined by a disulfide bond. A helical membrane pass occupies residues 1734-1759 (SVGIFYFVSYIIISFLVVVNMYIAVI). Over 1760 to 1988 (LENFSVATEE…KGKDSKESKK (229 aa)) the chain is Cytoplasmic. Residues 1889 to 1918 (EDVSATVIQRAYRRYRLRQNVKNISSIYIK) form the IQ domain. The segment at 1934-1988 (FDNVNENSSPEKTDATSSTTSPPSYDSVTKPDKEKYEQDRTEKEDKGKDSKESKK) is disordered. A compositionally biased stretch (low complexity) spans 1948–1961 (ATSSTTSPPSYDSV). A compositionally biased stretch (basic and acidic residues) spans 1962–1988 (TKPDKEKYEQDRTEKEDKGKDSKESKK).

This sequence belongs to the sodium channel (TC 1.A.1.10) family. Nav1.7/SCN9A subfamily. In terms of assembly, the Nav1.7 voltage-gated sodium channel consists of an ion-conducting alpha subunit SCN9A which is functional on its own regulated by one or more beta-1 (SCN1B), beta-2 (SCN2B), beta-3 (SCN3B) and beta-4 (SCN4B) subunits. SCN1B and SCN3B are non-covalently associated with SCN9A. SCN2B and SCN4B are disulfide-linked to SCN9A. SCN1B regulates channel inactivation. Interacts with NEDD4 and NEDD4L; regulates Nav1.7 activity most probably through ubiquitination and subsequent endocytosis. Interacts with TMEM233; modulates the gating properties of NaV1.7. Phosphorylation at Ser-1490 by PKC in a highly conserved cytoplasmic loop increases peak sodium currents. In terms of processing, ubiquitinated by NEDD4L; which may promote its endocytosis. As to expression, expressed strongly in dorsal root ganglion, with only minor levels elsewhere in the body, smooth muscle cells, MTC cell line and C-cell carcinoma. Also expressed in vagus nerves within the head and neck region. Isoform 1 is expressed preferentially in the central and peripheral nervous system. Isoform 2 is expressed preferentially in the dorsal root ganglion.

The protein localises to the cell membrane. The protein resides in the cell projection. It is found in the neuron projection. Its subcellular location is the axon. The enzyme catalyses Na(+)(in) = Na(+)(out). With respect to regulation, inhibited by tetrodotoxin. Weakly inhibited by saxitoxin. Inhibited by the spider huwentoxin-IV that binds the extracellular loop S3-S4 of repeat II. Inhibited by the spider protoxin-II that binds the extracellular loop S3-S4 of repeats II and IV. Inhibited by the scorpion alpha-toxins CvIV4 and AaH2. Inhibited by the conotoxin GVIIJ. Inhibited by the spider beta/delta-theraphotoxin-Pre1a. Its function is as follows. Pore-forming subunit of Nav1.7, a voltage-gated sodium (Nav) channel that directly mediates the depolarizing phase of action potentials in excitable membranes. Navs, also called VGSCs (voltage-gated sodium channels) or VDSCs (voltage-dependent sodium channels), operate by switching between closed and open conformations depending on the voltage difference across the membrane. In the open conformation they allow Na(+) ions to selectively pass through the pore, along their electrochemical gradient. The influx of Na(+) ions provokes membrane depolarization, initiating the propagation of electrical signals throughout cells and tissues. Nav1.7 plays a crucial role in controlling the excitability and action potential propagation from nociceptor neurons, thereby contributing to the sensory perception of pain. The sequence is that of Sodium channel protein type 9 subunit alpha from Homo sapiens (Human).